The chain runs to 465 residues: Cysteine--tRNA ligase (465 aa).

Cys-30 provides a ligand contact to Zn(2+). The short motif at 32-42 (ITVYDYCHVGH) is the 'HIGH' region element. 3 residues coordinate Zn(2+): Cys-214, His-239, and Glu-243. A 'KMSKS' region motif is present at residues 271–275 (KMSKS). Residue Lys-274 coordinates ATP.

This sequence belongs to the class-I aminoacyl-tRNA synthetase family. In terms of assembly, monomer. It depends on Zn(2+) as a cofactor.

It localises to the cytoplasm. It carries out the reaction tRNA(Cys) + L-cysteine + ATP = L-cysteinyl-tRNA(Cys) + AMP + diphosphate. In Burkholderia multivorans (strain ATCC 17616 / 249), this protein is Cysteine--tRNA ligase.